Consider the following 306-residue polypeptide: Probable 2-dehydro-3-deoxygalactonokinase DgoK1 (306 aa).

The protein belongs to the DgoK family.

The catalysed reaction is 2-dehydro-3-deoxy-D-galactonate + ATP = 2-dehydro-3-deoxy-6-phospho-D-galactonate + ADP + H(+). It functions in the pathway carbohydrate acid metabolism; D-galactonate degradation; D-glyceraldehyde 3-phosphate and pyruvate from D-galactonate: step 2/3. Its function is as follows. Involved in the degradation of galactose via the DeLey-Doudoroff pathway. This Rhizobium meliloti (strain 1021) (Ensifer meliloti) protein is Probable 2-dehydro-3-deoxygalactonokinase DgoK1 (dgoK1).